Here is a 359-residue protein sequence, read N- to C-terminus: Acetoin catabolism protein X (359 aa).

The protein resides in the cell membrane. Its pathway is ketone degradation; acetoin degradation. In terms of biological role, essential for acetoin catabolism. The chain is Acetoin catabolism protein X (acoX) from Cupriavidus necator (strain ATCC 17699 / DSM 428 / KCTC 22496 / NCIMB 10442 / H16 / Stanier 337) (Ralstonia eutropha).